The sequence spans 259 residues: 4-hydroxy-tetrahydrodipicolinate reductase (259 aa).

9–14 contributes to the NAD(+) binding site; it reads GANGRM. An NADP(+)-binding site is contributed by arginine 37. Residues 92-94 and 116-119 each bind NAD(+); these read GTT and ASNM. Histidine 149 serves as the catalytic Proton donor/acceptor. Histidine 150 is a binding site for (S)-2,3,4,5-tetrahydrodipicolinate. Lysine 153 (proton donor) is an active-site residue. 159-160 contributes to the (S)-2,3,4,5-tetrahydrodipicolinate binding site; the sequence is GT.

It belongs to the DapB family.

The protein localises to the cytoplasm. It catalyses the reaction (S)-2,3,4,5-tetrahydrodipicolinate + NAD(+) + H2O = (2S,4S)-4-hydroxy-2,3,4,5-tetrahydrodipicolinate + NADH + H(+). The catalysed reaction is (S)-2,3,4,5-tetrahydrodipicolinate + NADP(+) + H2O = (2S,4S)-4-hydroxy-2,3,4,5-tetrahydrodipicolinate + NADPH + H(+). Its pathway is amino-acid biosynthesis; L-lysine biosynthesis via DAP pathway; (S)-tetrahydrodipicolinate from L-aspartate: step 4/4. Catalyzes the conversion of 4-hydroxy-tetrahydrodipicolinate (HTPA) to tetrahydrodipicolinate. The chain is 4-hydroxy-tetrahydrodipicolinate reductase from Desulfovibrio desulfuricans (strain ATCC 27774 / DSM 6949 / MB).